The sequence spans 240 residues: Probable transcriptional activator (240 aa).

The interval 17–28 (CTSCQARHGVVC) is essential for the oxygen-regulated activity. Residues 158-232 (RTAEEKVASL…FRHIIVPDMD (75 aa)) enclose the HTH crp-type domain. A DNA-binding region (H-T-H motif) is located at residues 191–210 (RAEIADFLGLTIETVSRQMT).

Promotes the microaerobic and symbiotic induction of fixN, possibly by binding to the FNR consensus binding site upstream of fixN. In Rhizobium leguminosarum bv. viciae, this protein is Probable transcriptional activator (fnrN).